The chain runs to 53 residues: Chlorophyll a-b binding protein 1, chloroplastic (53 aa).

Phenylalanine 18 is a binding site for chlorophyll b. Residues glutamate 48 and histidine 51 each coordinate chlorophyll a. Position 53 (arginine 53) interacts with chlorophyll b.

It belongs to the light-harvesting chlorophyll a/b-binding (LHC) protein family. As to quaternary structure, the LHC complex consists of chlorophyll a-b binding proteins. The cofactor is Binds at least 14 chlorophylls (8 Chl-a and 6 Chl-b) and carotenoids such as lutein and neoxanthin.. Photoregulated by reversible phosphorylation of its threonine residues.

It is found in the plastid. Its subcellular location is the chloroplast thylakoid membrane. Its function is as follows. The light-harvesting complex (LHC) functions as a light receptor, it captures and delivers excitation energy to photosystems with which it is closely associated. The sequence is that of Chlorophyll a-b binding protein 1, chloroplastic from Populus euphratica (Euphrates poplar).